The sequence spans 176 residues: Protein CURLY FLAG LEAF 2 (176 aa).

Positions 41 to 46 match the EAR motif; sequence FLELSS. Positions 48-82 constitute a WW domain; sequence FSVPSHLEQCLDLKTGEIYYRSWNSGMRVKEDPRK. Disordered stretches follow at residues 77 to 106 and 111 to 130; these read KEDP…SSEE and YESE…YHKE. Residues 93–106 show a composition bias toward low complexity; the sequence is SSGESSGTVFSSEE.

May interact with BHLH122/CFLAP1 and BHLH80/CFLAP2.

Functionally, may negatively regulate the cuticle development by interacting with the HD-ZIP IV transcription factor HDG1. In Arabidopsis thaliana (Mouse-ear cress), this protein is Protein CURLY FLAG LEAF 2.